Here is a 364-residue protein sequence, read N- to C-terminus: Bifunctional protein Rv2228c (364 aa).

The RNase H type-1 domain occupies 1-139; that stretch reads MKVVIEADGG…MDAAAQSAAA (139 aa). Mg(2+) is bound by residues Asp8, Glu49, Asp73, and Asp123. His172 serves as the catalytic Tele-phosphohistidine intermediate. Glu246 functions as the Proton donor/acceptor; for phosphatase activity in the catalytic mechanism.

This sequence in the N-terminal section; belongs to the RNase H family. It in the C-terminal section; belongs to the histidine phosphatase superfamily. The N-terminal domain alone is monomeric in solution but associates in the crystal to form a dimer. The cofactor is Mg(2+).

The enzyme catalyses Endonucleolytic cleavage to 5'-phosphomonoester.. The catalysed reaction is adenosylcob(III)alamin 5'-phosphate + H2O = adenosylcob(III)alamin + phosphate. It catalyses the reaction alpha-ribazole 5'-phosphate + H2O = alpha-ribazole + phosphate. It participates in nucleoside biosynthesis; alpha-ribazole biosynthesis; alpha-ribazole from 5,6-dimethylbenzimidazole: step 2/2. Endonuclease that displays both RNase H activity with a hybrid RNA/DNA substrate as well as double-stranded RNase activity. As the only authenticated RNase HI in M.tuberculosis, probably plays an important role in the physiology of this organism, being likely involved in bacterial replication. Functionally, catalyzes the hydrolysis of the phospho group from alpha-ribazole 5'-phosphate to form alpha-ribazole. May also catalyze the conversion of adenosylcobalamin 5'-phosphate to adenosylcobalamin (vitamin B12). Has a possible role in B12 recycling, but the primary role of the C-terminal domain of this phosphatase enzyme could be phosphate generation to help bacterial survival within the macrophage, which is a phosphate-deprived environment. In Mycobacterium tuberculosis (strain ATCC 25618 / H37Rv), this protein is Bifunctional protein Rv2228c.